A 235-amino-acid chain; its full sequence is Pyridoxine 5'-phosphate synthase (235 aa).

Position 6 (asparagine 6) interacts with 3-amino-2-oxopropyl phosphate. 8 to 9 (DH) contributes to the 1-deoxy-D-xylulose 5-phosphate binding site. Arginine 17 contributes to the 3-amino-2-oxopropyl phosphate binding site. The active-site Proton acceptor is the histidine 42. 1-deoxy-D-xylulose 5-phosphate-binding residues include arginine 44 and histidine 49. Glutamate 69 acts as the Proton acceptor in catalysis. 1-deoxy-D-xylulose 5-phosphate is bound at residue threonine 99. Histidine 188 serves as the catalytic Proton donor. 3-amino-2-oxopropyl phosphate contacts are provided by residues glycine 189 and 210 to 211 (GH).

It belongs to the PNP synthase family. As to quaternary structure, homooctamer; tetramer of dimers.

The protein resides in the cytoplasm. It carries out the reaction 3-amino-2-oxopropyl phosphate + 1-deoxy-D-xylulose 5-phosphate = pyridoxine 5'-phosphate + phosphate + 2 H2O + H(+). It functions in the pathway cofactor biosynthesis; pyridoxine 5'-phosphate biosynthesis; pyridoxine 5'-phosphate from D-erythrose 4-phosphate: step 5/5. In terms of biological role, catalyzes the complicated ring closure reaction between the two acyclic compounds 1-deoxy-D-xylulose-5-phosphate (DXP) and 3-amino-2-oxopropyl phosphate (1-amino-acetone-3-phosphate or AAP) to form pyridoxine 5'-phosphate (PNP) and inorganic phosphate. The polypeptide is Pyridoxine 5'-phosphate synthase (Wolbachia pipientis subsp. Culex pipiens (strain wPip)).